A 128-amino-acid polypeptide reads, in one-letter code: CD59 glycoprotein (128 aa).

The signal sequence occupies residues 1 to 25 (MGIQGGSVLFGLLLVLAVFCHSGHS). The UPAR/Ly6 domain maps to 26 to 108 (LQCYNCPNPT…QLENGGTSLS (83 aa)). 3 disulfide bridges follow: Cys-28/Cys-51, Cys-31/Cys-38, and Cys-44/Cys-64. An N-linked (GlcNAc...) asparagine glycan is attached at Asn-43. N-linked (Glc) (glycation) lysine glycosylation occurs at Lys-66. 2 cysteine pairs are disulfide-bonded: Cys-70-Cys-88 and Cys-89-Cys-94. Residues Thr-76 and Thr-77 are each glycosylated (O-linked (GalNAc...) threonine). The GPI-anchor amidated asparagine moiety is linked to residue Asn-102. Positions 103 to 128 (GGTSLSEKTVLLLVTPFLAAAWSLHP) are cleaved as a propeptide — removed in mature form.

In terms of assembly, interacts with T-cell surface antigen CD2. N- and O-glycosylated. The N-glycosylation mainly consists of a family of biantennary complex-type structures with and without lactosamine extensions and outer arm fucose residues. Also significant amounts of triantennary complexes (22%). Variable sialylation also present in the Asn-43 oligosaccharide. The predominant O-glycans are mono-sialylated forms of the disaccharide, Gal-beta-1,3GalNAc, and their sites of attachment are probably on Thr-76 and Thr-77. The GPI-anchor of soluble urinary CD59 has no inositol-associated phospholipid, but is composed of seven different GPI-anchor variants of one or more monosaccharide units. Major variants contain sialic acid, mannose and glucosamine. Sialic acid linked to an N-acetylhexosamine-galactose arm is present in two variants. Post-translationally, glycated. Glycation is found in diabetic subjects, but only at minimal levels in nondiabetic subjects. Glycated CD59 lacks MAC-inhibitory function and confers to vascular complications of diabetes.

The protein resides in the cell membrane. It is found in the secreted. Potent inhibitor of the complement membrane attack complex (MAC) action, which protects human cells from damage during complement activation. Acts by binding to the beta-haipins of C8 (C8A and C8B) components of the assembling MAC, forming an intermolecular beta-sheet that prevents incorporation of the multiple copies of C9 required for complete formation of the osmolytic pore. In terms of biological role, the soluble form from urine retains its specific complement binding activity, but exhibits greatly reduced ability to inhibit complement membrane attack complex (MAC) assembly on cell membranes. The polypeptide is CD59 glycoprotein (Homo sapiens (Human)).